The following is a 169-amino-acid chain: Large ribosomal subunit protein uL10 (169 aa).

The protein belongs to the universal ribosomal protein uL10 family. As to quaternary structure, part of the ribosomal stalk of the 50S ribosomal subunit. The N-terminus interacts with L11 and the large rRNA to form the base of the stalk. The C-terminus forms an elongated spine to which L12 dimers bind in a sequential fashion forming a multimeric L10(L12)X complex.

Functionally, forms part of the ribosomal stalk, playing a central role in the interaction of the ribosome with GTP-bound translation factors. This is Large ribosomal subunit protein uL10 from Rickettsia felis (strain ATCC VR-1525 / URRWXCal2) (Rickettsia azadi).